A 121-amino-acid chain; its full sequence is Large ribosomal subunit protein uL14 (121 aa).

Belongs to the universal ribosomal protein uL14 family. Part of the 50S ribosomal subunit. Forms a cluster with proteins L3 and L19. In the 70S ribosome, L14 and L19 interact and together make contacts with the 16S rRNA in bridges B5 and B8.

In terms of biological role, binds to 23S rRNA. Forms part of two intersubunit bridges in the 70S ribosome. This Prochlorococcus marinus (strain MIT 9515) protein is Large ribosomal subunit protein uL14.